Reading from the N-terminus, the 114-residue chain is Probable prefoldin subunit 2 (114 aa).

The protein belongs to the prefoldin subunit beta family. As to quaternary structure, heterohexamer of two PFD-alpha type and four PFD-beta type subunits.

Functionally, binds specifically to cytosolic chaperonin (c-CPN) and transfers target proteins to it. Binds to nascent polypeptide chain and promotes folding in an environment in which there are many competing pathways for nonnative proteins. The sequence is that of Probable prefoldin subunit 2 from Schizosaccharomyces pombe (strain 972 / ATCC 24843) (Fission yeast).